Reading from the N-terminus, the 157-residue chain is Protein-export protein SecB (157 aa).

It belongs to the SecB family. As to quaternary structure, homotetramer, a dimer of dimers. One homotetramer interacts with 1 SecA dimer.

It localises to the cytoplasm. In terms of biological role, one of the proteins required for the normal export of preproteins out of the cell cytoplasm. It is a molecular chaperone that binds to a subset of precursor proteins, maintaining them in a translocation-competent state. It also specifically binds to its receptor SecA. In Alcanivorax borkumensis (strain ATCC 700651 / DSM 11573 / NCIMB 13689 / SK2), this protein is Protein-export protein SecB.